Reading from the N-terminus, the 133-residue chain is Agglutinin alpha chain (133 aa).

Residues 1-133 (GVTFDDGAYT…LDYFSIYLSL (133 aa)) form the Jacalin-type lectin domain.

The protein belongs to the jacalin lectin family. Formed of four alpha chains and four beta chains.

Functionally, D-galactose-specific lectin, binds the T-antigen structure Gal-beta1,3-GalNAc. This Maclura pomifera (Osage orange) protein is Agglutinin alpha chain.